A 315-amino-acid polypeptide reads, in one-letter code: Beta-ketoacyl-[acyl-carrier-protein] synthase III 2 (315 aa).

Active-site residues include Cys-113 and His-241. The segment at 242–246 (QANLR) is ACP-binding. The active site involves Asn-271.

The protein belongs to the thiolase-like superfamily. FabH family. In terms of assembly, homodimer.

The protein localises to the cytoplasm. It carries out the reaction malonyl-[ACP] + acetyl-CoA + H(+) = 3-oxobutanoyl-[ACP] + CO2 + CoA. It functions in the pathway lipid metabolism; fatty acid biosynthesis. In terms of biological role, catalyzes the condensation reaction of fatty acid synthesis by the addition to an acyl acceptor of two carbons from malonyl-ACP. Catalyzes the first condensation reaction which initiates fatty acid synthesis and may therefore play a role in governing the total rate of fatty acid production. Possesses both acetoacetyl-ACP synthase and acetyl transacylase activities. Its substrate specificity determines the biosynthesis of branched-chain and/or straight-chain of fatty acids. In Streptomyces avermitilis (strain ATCC 31267 / DSM 46492 / JCM 5070 / NBRC 14893 / NCIMB 12804 / NRRL 8165 / MA-4680), this protein is Beta-ketoacyl-[acyl-carrier-protein] synthase III 2.